A 448-amino-acid chain; its full sequence is Guanine deaminase (448 aa).

His-74 and His-76 together coordinate Zn(2+). Substrate is bound by residues 76-79 (HAPQ), 204-205 (RF), 231-234 (HISE), and Asp-319. Residues His-231 and Asp-319 each coordinate Zn(2+).

The protein belongs to the metallo-dependent hydrolases superfamily. ATZ/TRZ family. Zn(2+) is required as a cofactor.

The catalysed reaction is guanine + H2O + H(+) = xanthine + NH4(+). The protein operates within purine metabolism; guanine degradation; xanthine from guanine: step 1/1. Strongly inhibited by p-chloromercuribenzoate (PCMB). Potassium cyanide (KCN) strongly inhibits activity towards 7,8-dihydropterin but has almost no effect on activity towards guanine. Pterin inhibits activity towards guanine but has little effect on activity towards 7,8-dihydropterin. Functionally, catalyzes the hydrolytic deamination of guanine, producing xanthine and ammonia. Also has 7,8-dihydropterin deaminase activity, which plays a role in synthesis of the red eye pigment aurodrosopterin. This Drosophila melanogaster (Fruit fly) protein is Guanine deaminase.